Here is a 264-residue protein sequence, read N- to C-terminus: Thiazole synthase (264 aa).

The active-site Schiff-base intermediate with DXP is K106. Residues G167, 193-194, and 215-216 each bind 1-deoxy-D-xylulose 5-phosphate; these read AG and NT.

Belongs to the ThiG family. Homotetramer. Forms heterodimers with either ThiH or ThiS.

The protein localises to the cytoplasm. The catalysed reaction is [ThiS sulfur-carrier protein]-C-terminal-Gly-aminoethanethioate + 2-iminoacetate + 1-deoxy-D-xylulose 5-phosphate = [ThiS sulfur-carrier protein]-C-terminal Gly-Gly + 2-[(2R,5Z)-2-carboxy-4-methylthiazol-5(2H)-ylidene]ethyl phosphate + 2 H2O + H(+). Its pathway is cofactor biosynthesis; thiamine diphosphate biosynthesis. Its function is as follows. Catalyzes the rearrangement of 1-deoxy-D-xylulose 5-phosphate (DXP) to produce the thiazole phosphate moiety of thiamine. Sulfur is provided by the thiocarboxylate moiety of the carrier protein ThiS. In vitro, sulfur can be provided by H(2)S. This chain is Thiazole synthase, found in Thioalkalivibrio sulfidiphilus (strain HL-EbGR7).